We begin with the raw amino-acid sequence, 62 residues long: Large ribosomal subunit protein bL28 (62 aa).

Belongs to the bacterial ribosomal protein bL28 family.

The polypeptide is Large ribosomal subunit protein bL28 (Bacillus velezensis (strain DSM 23117 / BGSC 10A6 / LMG 26770 / FZB42) (Bacillus amyloliquefaciens subsp. plantarum)).